A 329-amino-acid chain; its full sequence is MTEMRVKADLGDCRFYKKKFPEVDDLIMVKVNRIEDMGAYVSILEYNDMEGMILMSELSKRRFRSVNKLIRVGRHEVVLVLRVDSQKGYIDLSKRRVSPKDIIKCEEKFSKSKKVHQTVRHVAKEHGITVEELNEKAIWPLYERYGHALDALKEATMNPENVFKGLDISEEIKNSLLKDIKLRLTPQALKLRGRIDVWCFGYEGIDAVKEALKKGKEISNDKVSINIKLIAPPQYVIVTSCHDKDLGMAKIQEAMKVISDKIKEYKGGDFKQQGEILVIGGDEEKRLEELLDKHDGISSDDDDYNTSDEDDENSSEEDENTSEDEEEED.

Residues 24–95 (DDLIMVKVNR…QKGYIDLSKR (72 aa)) form the S1 motif domain. Position 59 is a phosphoserine; by eIK1, eIK2 and PK4 (Ser-59). The segment at 291–329 (LDKHDGISSDDDDYNTSDEDDENSSEEDENTSEDEEEED) is disordered. Residues 298–329 (SSDDDDYNTSDEDDENSSEEDENTSEDEEEED) are compositionally biased toward acidic residues.

The protein belongs to the eIF-2-alpha family. Phosphorylated at Ser-59 by eIK1 in response to amino acid starvation. Phosphorylates at Ser-59 in schizonts and gametocytes but not in rings and young trophozoites. Phosphorylates at Ser-59 by eIK2 in salivary gland sporozoites but not in midgut and hemocoel sporozoites. Dephosphorylated at Ser-59 by UIS2. Phosphorylation of eIF2alpha subunit of the pre-initiation complex eIF2 inhibits recycling of inactive eIF2-GDP to active eIF2-GTP by limiting the activity of the guanine nucleotide exchange factor eIF2B and thus, inhibits protein translation.

The protein resides in the cytoplasm. Its subcellular location is the stress granule. In terms of biological role, functions in the early steps of protein synthesis by forming a ternary complex with GTP and initiator tRNA. May regulate protein translation in response to amino acid starvation. May regulate protein at various stages of parasite development. The protein is Eukaryotic translation initiation factor 2 subunit 1 of Plasmodium falciparum (isolate 3D7).